We begin with the raw amino-acid sequence, 160 residues long: Cytochrome b6-f complex subunit 4 (160 aa).

Helical transmembrane passes span 36 to 56, 95 to 115, and 131 to 151; these read LLYI…GLAV, LLGV…PFLE, and TVFL…TLPI.

Belongs to the cytochrome b family. PetD subfamily. The 4 large subunits of the cytochrome b6-f complex are cytochrome b6, subunit IV (17 kDa polypeptide, petD), cytochrome f and the Rieske protein, while the 4 small subunits are petG, petL, petM and petN. The complex functions as a dimer.

The protein localises to the plastid. Its subcellular location is the chloroplast thylakoid membrane. Component of the cytochrome b6-f complex, which mediates electron transfer between photosystem II (PSII) and photosystem I (PSI), cyclic electron flow around PSI, and state transitions. This Morus indica (Mulberry) protein is Cytochrome b6-f complex subunit 4.